The chain runs to 235 residues: Octanoyltransferase (235 aa).

Positions Ala-37 to Leu-220 constitute a BPL/LPL catalytic domain. Residues Arg-78–His-85, Ala-150–Gly-152, and Gly-163–Ala-165 contribute to the substrate site. Catalysis depends on Cys-181, which acts as the Acyl-thioester intermediate.

This sequence belongs to the LipB family.

Its subcellular location is the cytoplasm. It catalyses the reaction octanoyl-[ACP] + L-lysyl-[protein] = N(6)-octanoyl-L-lysyl-[protein] + holo-[ACP] + H(+). Its pathway is protein modification; protein lipoylation via endogenous pathway; protein N(6)-(lipoyl)lysine from octanoyl-[acyl-carrier-protein]: step 1/2. Catalyzes the transfer of endogenously produced octanoic acid from octanoyl-acyl-carrier-protein onto the lipoyl domains of lipoate-dependent enzymes. Lipoyl-ACP can also act as a substrate although octanoyl-ACP is likely to be the physiological substrate. The chain is Octanoyltransferase from Mycobacterium leprae (strain Br4923).